We begin with the raw amino-acid sequence, 108 residues long: Parvalbumin beta (108 aa).

EF-hand domains follow at residues 38-73 and 77-108; these read KSTD…FSST and LTAA…LVKA. 11 residues coordinate Ca(2+): Asp-51, Asp-53, Ser-55, Phe-57, Glu-59, Glu-62, Asp-90, Asp-92, Asp-94, Lys-96, and Glu-101.

This sequence belongs to the parvalbumin family.

In terms of biological role, in muscle, parvalbumin is thought to be involved in relaxation after contraction. It binds two calcium ions. The chain is Parvalbumin beta from Graptemys geographica (Common map turtle).